We begin with the raw amino-acid sequence, 129 residues long: Small ribosomal subunit protein uS11 (129 aa).

This sequence belongs to the universal ribosomal protein uS11 family. Part of the 30S ribosomal subunit. Interacts with proteins S7 and S18. Binds to IF-3.

Located on the platform of the 30S subunit, it bridges several disparate RNA helices of the 16S rRNA. Forms part of the Shine-Dalgarno cleft in the 70S ribosome. The polypeptide is Small ribosomal subunit protein uS11 (Enterococcus faecalis (strain ATCC 700802 / V583)).